A 421-amino-acid chain; its full sequence is Trimethyllysine dioxygenase, mitochondrial (421 aa).

The transit peptide at 1–15 (MWYHRLSHLHSRLQD) directs the protein to the mitochondrion. Residues Lys179 and Lys236 each carry the N6-acetyllysine modification. Residues His242, Asp244, and His389 each contribute to the Fe cation site.

This sequence belongs to the gamma-BBH/TMLD family. In terms of assembly, homodimer. Fe(2+) serves as cofactor. Requires L-ascorbate as cofactor. All isoforms, but isoform 8, are widely expressed in adult and fetal tissues. Isoform 8 is restricted to heart and skeletal muscle.

The protein localises to the mitochondrion matrix. It catalyses the reaction N(6),N(6),N(6)-trimethyl-L-lysine + 2-oxoglutarate + O2 = (3S)-3-hydroxy-N(6),N(6),N(6)-trimethyl-L-lysine + succinate + CO2. The protein operates within amine and polyamine biosynthesis; carnitine biosynthesis. In terms of biological role, converts trimethyllysine (TML) into hydroxytrimethyllysine (HTML). The polypeptide is Trimethyllysine dioxygenase, mitochondrial (TMLHE) (Homo sapiens (Human)).